We begin with the raw amino-acid sequence, 534 residues long: Cytochrome P450 monooxygenase ascG (534 aa).

A helical membrane pass occupies residues 13–33 (FVASFPALSAAAGLIVAISFI). The N-linked (GlcNAc...) asparagine glycan is linked to asparagine 466. Cysteine 469 contacts heme.

The protein belongs to the cytochrome P450 family. Heme is required as a cofactor.

The protein localises to the membrane. The catalysed reaction is ilicicolin C + NADPH + O2 + H(+) = ascochlorin + NADP(+) + 2 H2O. It functions in the pathway secondary metabolite biosynthesis; terpenoid biosynthesis. In terms of biological role, cytochrome P450 monooxygenase; part of the asc-1 gene cluster that mediates the biosynthesis of both ascochlorin and ascofuranone, a strong inhibitor of cyanide-insensitive alternative oxidases and a promising drug candidate against African trypanosomiasis. The first step in the pathway is performed by the non-reducing polyketide synthase ascC that produces orsellinic acid by condensing acetyl-CoA with 3 malonyl-CoA units. Orsellinic acid is then prenylated by the prenyltransferase ascA to yield ilicicolinic acid B. Ilicicolinic acid B is further reduced to ilicicolin B by the reductase ascB. The halogenase ascD then chlorinates ilicicolin B to produce ilicicolin A which is converted to ilicicolin A epoxide by the cytochrome P450 monooxygenase ascE that catalyzes stereoselective epoxidation of the terminal double bond of the prenyl group. Ilicicolin A epoxide is the last common precursor for the biosynthesis of ascofuranone and ascochlorin. The terpene cyclase ascF produces a monocyclic terpene, and the cyclization reaction is proposed to be initiated by protonation of the terminal epoxide of ilicicolin A epoxide to generate a monocyclic tertiarycation, which is followed by a series of hydride and methyl shifts with abstraction of proton, leading to the formation of the (14S,15R,19R)-trimethylcyclohexanone ring structure of ilicicolin C, which is finally reduced to ascochlorin by the dehydrogenase ascG. On the other hand, ilicicolin A epoxide is hydroxylated by the cytochrome P450 monooxygenase ascH, and the resultant product is cyclized by the terpene cyclase ascI to ascofuranol via protonation-initiated epoxide ring opening, which facilitates the 6-endo-tet cyclization to form the tetrahy-drofuran ring. Finally, ascofuranol is oxidized into ascofuranone by ascJ. This chain is Cytochrome P450 monooxygenase ascG, found in Acremonium egyptiacum (Oospora egyptiaca).